Reading from the N-terminus, the 1237-residue chain is Zinc finger protein 687 (1237 aa).

2 disordered regions span residues 1-80 and 96-330; these read MGDM…PDIS and EALA…PLKV. The segment covering 97-111 has biased composition (low complexity); that stretch reads ALAGGSAGDGAQAAG. Ser102, Ser129, and Ser140 each carry phosphoserine. The span at 132-144 shows a compositional bias: pro residues; the sequence is PSLPGTPHSPAPP. Thr148 is subject to Phosphothreonine. A phosphoserine mark is found at Ser227, Ser242, Ser251, Ser253, Ser266, and Ser271. Residues 234–244 are compositionally biased toward polar residues; the sequence is LAQQGSGSSPK. Residue Lys285 forms a Glycyl lysine isopeptide (Lys-Gly) (interchain with G-Cter in SUMO2) linkage. A compositionally biased stretch (low complexity) spans 297 to 310; it reads SSPGSPQSPSSGAE. Glycyl lysine isopeptide (Lys-Gly) (interchain with G-Cter in SUMO2) cross-links involve residues Lys336 and Lys372. Position 374 is a phosphoserine (Ser374). At Thr377 the chain carries Phosphothreonine. Glycyl lysine isopeptide (Lys-Gly) (interchain with G-Cter in SUMO2) cross-links involve residues Lys384, Lys397, and Lys422. At Ser433 the chain carries Phosphoserine. Glycyl lysine isopeptide (Lys-Gly) (interchain with G-Cter in SUMO2) cross-links involve residues Lys435, Lys439, Lys451, and Lys464. Ser495 bears the Phosphoserine mark. A C2H2-type 1; degenerate zinc finger spans residues 533–552; that stretch reads YRCLECGDAFSLEKSLARHY. 5 C2H2-type zinc fingers span residues 705–727, 764–787, 792–815, 827–849, and 858–881; these read NVCP…QRMH, YRCP…QTSH, HKCP…YSQH, YKCA…FDQH, and FKCP…KNTH. The span at 880–890 shows a compositional bias: basic and acidic residues; it reads THQSGRLEETA. Residues 880 to 957 are disordered; that stretch reads THQSGRLEET…LGSKGLKGGG (78 aa). At Thr900 the chain carries Phosphothreonine. Residues 915–925 show a composition bias toward low complexity; sequence AAPATEESSSS. Lys954 is covalently cross-linked (Glycyl lysine isopeptide (Lys-Gly) (interchain with G-Cter in SUMO2)). 2 consecutive C2H2-type zinc fingers follow at residues 963 to 986 and 993 to 1016; these read WTCG…KKEH and FPCR…RVNH. Lys1043 is covalently cross-linked (Glycyl lysine isopeptide (Lys-Gly) (interchain with G-Cter in SUMO2)). A disordered region spans residues 1051–1121; the sequence is LQLGAQSPGR…LRYRSSSSTE (71 aa). Phosphoserine is present on Ser1057. An Omega-N-methylarginine modification is found at Arg1060. Ser1082, Ser1083, and Ser1085 each carry phosphoserine. Arg1101 is subject to Omega-N-methylarginine. 2 positions are modified to phosphoserine: Ser1106 and Ser1118. A C2H2-type 9 zinc finger spans residues 1135 to 1158; sequence QQCLDCGLCFASPGSLSRHRFISH. Positions 1159 to 1195 are disordered; it reads KKRRGVGKASALGLGDGEEEAPPSRSDPDGGDSPLPA. Residues Ser1184, Ser1191, and Ser1211 each carry the phosphoserine modification. Residues 1200 to 1222 form a C2H2-type 10 zinc finger; sequence LTCKVCGKSCDSPLNLKTHFRTH.

This sequence belongs to the krueppel C2H2-type zinc-finger protein family. In terms of assembly, interacts with ZMYND8. Widely expressed with highest levels in obvary, muscle, blood and lung.

The protein localises to the cytoplasm. It localises to the nucleus. In terms of biological role, may be involved in transcriptional regulation. In Homo sapiens (Human), this protein is Zinc finger protein 687 (ZNF687).